We begin with the raw amino-acid sequence, 557 residues long: MRYNTAKLLVYDAEQVSKGIEKIQEHVENTEKYLSLYESTVINETDRIQLQELKALWEKYKSLVDKEVELVKSGKTEEARQLLLSDIDDIGDTLRDYFEAFVEYNTTAAKEKVDENKQVASTASTVMIVVIFVGILIAIALGVFISRIISKPIGQMVEAADRLALGDVEVDVKAETRDEIGKLAESFKRMIENIREQAYVVERIAAGDMTVDVRVKSDKDLLGKKLKEMVDTNNEVLSNINEVAAQVAAGAKQVSDSSMQLSQGATEQASSIEELTASLEQVANQTQLSAKNANQANELAEVAKNNAEQGNKQMAEMLNAMEEINNSSSNISRIIKVIDEIAFQTNILALNAAVEAARAGQHGKGFAVVAEEVRNLAARSANAAKETTELIEGTIKRTENGTKIARETAEALNKIVEGISKAATLVNDIAVASNEQAAAITQINQGIAQVSQVVQTNSATSEESAAASEELSSQAELLKRSIAKFKLKNMGKMTSNRYKEVSPEIMRMLEDYTENKQPKSYSKEENGEYSDGKETAEKDVGGLKQKILLSDSEFGKY.

The helical transmembrane segment at 122 to 145 (TASTVMIVVIFVGILIAIALGVFI) threads the bilayer. Positions 147–199 (RIISKPIGQMVEAADRLALGDVEVDVKAETRDEIGKLAESFKRMIENIREQAY) constitute an HAMP domain. In terms of domain architecture, Methyl-accepting transducer spans 243-472 (VAAQVAAGAK…ESAAASEELS (230 aa)). Gln-268 is modified (glutamate methyl ester (Gln)). The residue at position 274 (Glu-274) is a Glutamate methyl ester (Glu). At Gln-281 the chain carries Glutamate methyl ester (Gln). Glu-463 carries the post-translational modification Glutamate methyl ester (Glu). Positions 511–541 (DYTENKQPKSYSKEENGEYSDGKETAEKDVG) are enriched in basic and acidic residues. Positions 511–542 (DYTENKQPKSYSKEENGEYSDGKETAEKDVGG) are disordered.

Belongs to the methyl-accepting chemotaxis (MCP) protein family.

It is found in the cell membrane. Functionally, may bind attractants or detect changes in the extracellular concentration of soluble sugars. This chain is Putative sensory transducer protein, found in Acetivibrio thermocellus (strain ATCC 27405 / DSM 1237 / JCM 9322 / NBRC 103400 / NCIMB 10682 / NRRL B-4536 / VPI 7372) (Clostridium thermocellum).